A 111-amino-acid polypeptide reads, in one-letter code: Nucleoid-associated protein CT0805 (111 aa).

This sequence belongs to the YbaB/EbfC family. As to quaternary structure, homodimer.

Its subcellular location is the cytoplasm. It localises to the nucleoid. Functionally, binds to DNA and alters its conformation. May be involved in regulation of gene expression, nucleoid organization and DNA protection. The sequence is that of Nucleoid-associated protein CT0805 from Chlorobaculum tepidum (strain ATCC 49652 / DSM 12025 / NBRC 103806 / TLS) (Chlorobium tepidum).